A 51-amino-acid chain; its full sequence is Ovomucoid (51 aa).

The Kazal-like domain occupies 3-51 (VDCSGYPKPDCTLESFPLCGSDNQTYSNKCAFCNAAVERNVTLRHLGEC). Intrachain disulfides connect cysteine 5/cysteine 35, cysteine 13/cysteine 32, and cysteine 21/cysteine 51. A glycan (N-linked (GlcNAc...) asparagine) is linked at asparagine 42.

Its subcellular location is the secreted. The protein is Ovomucoid of Rhynchotus rufescens (Red-winged tinamou).